Consider the following 97-residue polypeptide: Protein RESPONSE TO LOW SULFUR 3 (97 aa).

Residues 8–42 (VTVAAEEVEELRRRNGELEREMEEMKKEMVQLWRR) are a coiled coil.

The sequence is that of Protein RESPONSE TO LOW SULFUR 3 from Arabidopsis thaliana (Mouse-ear cress).